The chain runs to 319 residues: MSLNFLDFEQPIAELEAKIDSLTAVSRQDEKLDINIDEEVHRLREKSVELTRKIFADLGAWQIAQLARHPQRPYTLDYVRLAFDEFDELAGDRAYADDKAIVGGIARLDGRPVMIIGHQKGRETKEKIRRNFGMPAPEGYRKALRLMQMAERFKMPIITFIDTPGAYPGVGAEERGQSEAIARNLREMSRLGVPVVCTVIGEGGSGGALAIGVGDKVNMLQYSTYSVISPEGCASILWKSADKAPLAAEAMGIIAPRLKELKLIDSIIPEPLGGAHRNPEAMAVSLKAQLLADLADLDVLSTEDLKNRRYQRLMSYGYA.

Residues 35-296 (NIDEEVHRLR…KAQLLADLAD (262 aa)) form the CoA carboxyltransferase C-terminal domain.

It belongs to the AccA family. As to quaternary structure, acetyl-CoA carboxylase is a heterohexamer composed of biotin carboxyl carrier protein (AccB), biotin carboxylase (AccC) and two subunits each of ACCase subunit alpha (AccA) and ACCase subunit beta (AccD).

It localises to the cytoplasm. It catalyses the reaction N(6)-carboxybiotinyl-L-lysyl-[protein] + acetyl-CoA = N(6)-biotinyl-L-lysyl-[protein] + malonyl-CoA. It participates in lipid metabolism; malonyl-CoA biosynthesis; malonyl-CoA from acetyl-CoA: step 1/1. In terms of biological role, component of the acetyl coenzyme A carboxylase (ACC) complex. First, biotin carboxylase catalyzes the carboxylation of biotin on its carrier protein (BCCP) and then the CO(2) group is transferred by the carboxyltransferase to acetyl-CoA to form malonyl-CoA. This Shigella sonnei (strain Ss046) protein is Acetyl-coenzyme A carboxylase carboxyl transferase subunit alpha.